The sequence spans 172 residues: NADH-ubiquinone oxidoreductase chain 6 (172 aa).

5 helical membrane passes run 1–21 (MAFY…AIAS), 24–44 (APYF…GILV), 53–73 (LILF…SAAL), 86–106 (VVFW…GFLL), and 140–160 (GKML…VLEV).

The protein belongs to the complex I subunit 6 family. In terms of assembly, core subunit of respiratory chain NADH dehydrogenase (Complex I) which is composed of 45 different subunits.

The protein localises to the mitochondrion inner membrane. The catalysed reaction is a ubiquinone + NADH + 5 H(+)(in) = a ubiquinol + NAD(+) + 4 H(+)(out). Core subunit of the mitochondrial membrane respiratory chain NADH dehydrogenase (Complex I) which catalyzes electron transfer from NADH through the respiratory chain, using ubiquinone as an electron acceptor. Essential for the catalytic activity and assembly of complex I. The polypeptide is NADH-ubiquinone oxidoreductase chain 6 (mt-nd6) (Danio rerio (Zebrafish)).